A 627-amino-acid polypeptide reads, in one-letter code: Carene synthase 3, chloroplastic (627 aa).

The N-terminal 36 residues, 1–36 (MSVISIVPLASKSCLYKSLMSSTHELKALCRPIATL), are a transit peptide targeting the chloroplast. The Mg(2+) site is built by aspartate 378, aspartate 382, and aspartate 530. The short motif at 378 to 382 (DDMYD) is the DDXXD motif element.

It belongs to the terpene synthase family. Tpsd subfamily. It depends on Mg(2+) as a cofactor. Mn(2+) is required as a cofactor.

The protein resides in the plastid. Its subcellular location is the chloroplast. It catalyses the reaction (2E)-geranyl diphosphate = (+)-car-3-ene + diphosphate. It functions in the pathway terpene metabolism; oleoresin biosynthesis. Its function is as follows. Terpene synthase (TPS) involved in defensive oleoresin formation in conifers in response to insect attack or other injury. This chain is Carene synthase 3, chloroplastic (TPS-3car3), found in Picea sitchensis (Sitka spruce).